The primary structure comprises 404 residues: Deoxyguanosinetriphosphate triphosphohydrolase-like protein (404 aa).

The disordered stretch occupies residues 1–33 (MSVGMAAPRAAFSCDPDRSRGRQFAEPPSSNRS). Residues 69-217 (RLTHSLEVAQ…AALADDIAYD (149 aa)) enclose the HD domain.

It belongs to the dGTPase family. Type 2 subfamily.

The sequence is that of Deoxyguanosinetriphosphate triphosphohydrolase-like protein from Rhodopseudomonas palustris (strain HaA2).